The chain runs to 456 residues: tRNA modification GTPase MnmE (456 aa).

The (6S)-5-formyl-5,6,7,8-tetrahydrofolate site is built by R21, E85, and K124. Residues 220–379 (QLRIVLYGEP…LLDEIQKKAA (160 aa)) enclose the TrmE-type G domain. K(+) is bound at residue N230. Residues 230 to 235 (NTGKSS), 249 to 255 (SEIPGTT), and 274 to 277 (DTAG) each bind GTP. S234 contributes to the Mg(2+) binding site. K(+) is bound by residues S249, I251, and T254. T255 serves as a coordination point for Mg(2+). K456 is a binding site for (6S)-5-formyl-5,6,7,8-tetrahydrofolate.

Belongs to the TRAFAC class TrmE-Era-EngA-EngB-Septin-like GTPase superfamily. TrmE GTPase family. Homodimer. Heterotetramer of two MnmE and two MnmG subunits. K(+) is required as a cofactor.

It is found in the cytoplasm. Its function is as follows. Exhibits a very high intrinsic GTPase hydrolysis rate. Involved in the addition of a carboxymethylaminomethyl (cmnm) group at the wobble position (U34) of certain tRNAs, forming tRNA-cmnm(5)s(2)U34. This is tRNA modification GTPase MnmE from Leptospira borgpetersenii serovar Hardjo-bovis (strain JB197).